The primary structure comprises 385 residues: Sensor histidine kinase Hik2 (385 aa).

Residues 11-131 (ALCRTQLELV…QQVAQTLAIA (121 aa)) form the GAF domain. Cysteine 13 contacts [3Fe-4S] cluster. Residues 142 to 270 (SHSPAQPLDQ…PQLPPIWLEE (129 aa)) form a DHp domain, may sense NaCl region. The Histidine kinase domain occupies 158–381 (DLLHQLRNPV…AFTLAIPWQM (224 aa)). The residue at position 161 (histidine 161) is a Phosphohistidine; by autocatalysis.

The protein belongs to the chloroplast sensor kinase protein family. Hexamers; upon treatment with 0.5 M NaCl only tetramers are seen. The tetramers are probably inactive. Requires [3Fe-4S] cluster as cofactor. Post-translationally, autophosphorylates, possibly on His-161.

The catalysed reaction is ATP + protein L-histidine = ADP + protein N-phospho-L-histidine.. Its function is as follows. Member of 2 two-component regulatory system(s) Hik2/Rre1 and Hik2/RppA. Transduces PQ (plastoquinone) redox signals to photosystem gene expression machinery during the adjustment of photosystem stoichiometry. Reduced PQ suppresses its autophosphorylation activity (i.e. kinase activity is higher under oxidizing conditions). As part of a two-component regulatory system with Rre1, controls expression of sigB and several other genes in response to hyperosmotic stress. May transfer phosphate to RppA in a possible Hik2/RppA two-component system. The protein is Sensor histidine kinase Hik2 of Thermosynechococcus vestitus (strain NIES-2133 / IAM M-273 / BP-1).